The following is a 264-amino-acid chain: 3-methyl-2-oxobutanoate hydroxymethyltransferase (264 aa).

D45 and D84 together coordinate Mg(2+). 3-methyl-2-oxobutanoate-binding positions include 45–46 (DS), D84, and K112. Residue E114 participates in Mg(2+) binding. The Proton acceptor role is filled by E181.

Belongs to the PanB family. Homodecamer; pentamer of dimers. It depends on Mg(2+) as a cofactor.

The protein resides in the cytoplasm. It carries out the reaction 3-methyl-2-oxobutanoate + (6R)-5,10-methylene-5,6,7,8-tetrahydrofolate + H2O = 2-dehydropantoate + (6S)-5,6,7,8-tetrahydrofolate. The protein operates within cofactor biosynthesis; (R)-pantothenate biosynthesis; (R)-pantoate from 3-methyl-2-oxobutanoate: step 1/2. Its function is as follows. Catalyzes the reversible reaction in which hydroxymethyl group from 5,10-methylenetetrahydrofolate is transferred onto alpha-ketoisovalerate to form ketopantoate. In Shewanella pealeana (strain ATCC 700345 / ANG-SQ1), this protein is 3-methyl-2-oxobutanoate hydroxymethyltransferase.